Consider the following 433-residue polypeptide: Serine hydroxymethyltransferase (433 aa).

121–123 (AHV) provides a ligand contact to (6S)-5,6,7,8-tetrahydrofolate. Position 227 is an N6-(pyridoxal phosphate)lysine (Lys-227). Glu-243 contacts (6S)-5,6,7,8-tetrahydrofolate.

The protein belongs to the SHMT family. Homodimer. Pyridoxal 5'-phosphate serves as cofactor.

The protein resides in the cytoplasm. Its pathway is amino-acid biosynthesis; glycine biosynthesis; glycine from L-serine: step 1/1. Catalyzes the reversible interconversion of serine and glycine with a modified folate serving as the one-carbon carrier. Also exhibits a pteridine-independent aldolase activity toward beta-hydroxyamino acids, producing glycine and aldehydes, via a retro-aldol mechanism. This is Serine hydroxymethyltransferase from Saccharolobus islandicus (strain Y.N.15.51 / Yellowstone #2) (Sulfolobus islandicus).